The sequence spans 312 residues: Acetyl-coenzyme A carboxylase carboxyl transferase subunit beta (312 aa).

The CoA carboxyltransferase N-terminal domain occupies 24–293; it reads LWIKCPDSGQ…VEHAKPAPQL (270 aa). The segment at 286–312 is disordered; that stretch reads HAKPAPQLPPPAKPAETAEAPAVATSA. A compositionally biased stretch (low complexity) spans 299–312; that stretch reads PAETAEAPAVATSA.

This sequence belongs to the AccD/PCCB family. In terms of assembly, acetyl-CoA carboxylase is a heterohexamer composed of biotin carboxyl carrier protein (AccB), biotin carboxylase (AccC) and two subunits each of ACCase subunit alpha (AccA) and ACCase subunit beta (AccD).

The protein resides in the cytoplasm. It carries out the reaction N(6)-carboxybiotinyl-L-lysyl-[protein] + acetyl-CoA = N(6)-biotinyl-L-lysyl-[protein] + malonyl-CoA. The protein operates within lipid metabolism; malonyl-CoA biosynthesis; malonyl-CoA from acetyl-CoA: step 1/1. Functionally, component of the acetyl coenzyme A carboxylase (ACC) complex. Biotin carboxylase (BC) catalyzes the carboxylation of biotin on its carrier protein (BCCP) and then the CO(2) group is transferred by the transcarboxylase to acetyl-CoA to form malonyl-CoA. The protein is Acetyl-coenzyme A carboxylase carboxyl transferase subunit beta of Bradyrhizobium sp. (strain ORS 278).